The primary structure comprises 955 residues: Translation initiation factor IF-2 (955 aa).

The segment at 49 to 352 (AFSQSSESTE…QAPSFGGVKI (304 aa)) is disordered. Positions 77-88 (PQQQTKASAPSA) are enriched in low complexity. 4 stretches are compositionally biased toward pro residues: residues 95–121 (PAVP…PGPR), 149–159 (RPVPKPGPRPG), 188–202 (RPGP…PPRP), and 209–223 (PPRP…PRPG). Positions 225–235 (GTAGGRPGSSA) are enriched in gly residues. The segment covering 238–264 (PPRPVPRPGPRPSPMNMPASRPTPPGG) has biased composition (pro residues). A compositionally biased stretch (gly residues) spans 273–322 (SGGGRGRGGGGGAGPRGGGAGGGAPRTGFGGRPGGGRGRGGTAGAFGRPG). The segment covering 326–335 (SRSRKSKKQR) has biased composition (basic residues). The tr-type G domain occupies 448–620 (PRAPVVTVMG…IILTADAELD (173 aa)). Residues 457 to 464 (GHVDHGKT) form a G1 region. 457–464 (GHVDHGKT) is a GTP binding site. The tract at residues 482–486 (GITQH) is G2. Positions 507–510 (DTPG) are G3. Residues 507–511 (DTPGH) and 561–564 (NKID) each bind GTP. The tract at residues 561 to 564 (NKID) is G4. Residues 597–599 (SAK) form a G5 region.

It belongs to the TRAFAC class translation factor GTPase superfamily. Classic translation factor GTPase family. IF-2 subfamily.

The protein resides in the cytoplasm. In terms of biological role, one of the essential components for the initiation of protein synthesis. Protects formylmethionyl-tRNA from spontaneous hydrolysis and promotes its binding to the 30S ribosomal subunits. Also involved in the hydrolysis of GTP during the formation of the 70S ribosomal complex. This is Translation initiation factor IF-2 from Thermobifida fusca (strain YX).